Reading from the N-terminus, the 130-residue chain is Small ribosomal subunit protein uS11 (130 aa).

It belongs to the universal ribosomal protein uS11 family. As to quaternary structure, part of the 30S ribosomal subunit. Interacts with proteins S7 and S18. Binds to IF-3.

Functionally, located on the platform of the 30S subunit, it bridges several disparate RNA helices of the 16S rRNA. Forms part of the Shine-Dalgarno cleft in the 70S ribosome. This Caldicellulosiruptor bescii (strain ATCC BAA-1888 / DSM 6725 / KCTC 15123 / Z-1320) (Anaerocellum thermophilum) protein is Small ribosomal subunit protein uS11.